The primary structure comprises 60 residues: Short neurotoxin C (60 aa).

Cystine bridges form between C3–C22, C17–C39, C41–C52, and C53–C58.

The protein belongs to the three-finger toxin family. Short-chain subfamily. Type I alpha-neurotoxin sub-subfamily. As to expression, expressed by the venom gland.

It is found in the secreted. In terms of biological role, binds to muscle nicotinic acetylcholine receptor (nAChR) and inhibit acetylcholine from binding to the receptor, thereby impairing neuromuscular transmission. This Aipysurus laevis (Olive sea snake) protein is Short neurotoxin C.